A 264-amino-acid chain; its full sequence is Cell division protein FtsQ (264 aa).

Residues 1-24 (MAGPTTAERGARQQESSGPPRVRR) are disordered. Residues 1-32 (MAGPTTAERGARQQESSGPPRVRRFRPPRLRT) are Cytoplasmic-facing. A helical transmembrane segment spans residues 33 to 53 (IIILAVALVLVAGGTVWVLYG). Residues 54–264 (SNWTRLERVS…VATAPASSGS (211 aa)) lie on the Extracellular side of the membrane. In terms of domain architecture, POTRA spans 57 to 126 (TRLERVSVSG…HGIGLKVTER (70 aa)).

This sequence belongs to the FtsQ/DivIB family. FtsQ subfamily.

The protein resides in the cell membrane. Essential cell division protein. This Streptomyces coelicolor (strain ATCC BAA-471 / A3(2) / M145) protein is Cell division protein FtsQ.